We begin with the raw amino-acid sequence, 772 residues long: MDINSNASVSPRPDGLPMTAGYNSASGKVRNSIRSIINHPEDSARAKERSETNSPKNNGNKKPRKKRKTFSCDTCRRVKTRCDFEPFIGKCYRCNVLQLDCSLARNKDNEILNTLREDGLLKKINSINHNLGSFSHLNADSPNESQSSFEKNGTVNFDNYMIDKRLSSLEEHIKSLHQKMDLIITTAKMSYNSDIKGPGDDIQNVDFSSNKTYDSRLTSGSETIRKTGEYRKENLFLNGFKLKESPLKLLHDIDERLFPSKATSKAAKLAGQQRPYAVARVNFLHFYENNQELCHKLAKEFLVRSHFWIIPGGRKEIDVEYAHSHLFITSVFTIIAMSFADNDKYAAEQEILYPLVERLLTNTLTMFEKLTAFDIEAILYCCMFHISRKAKRYRQLKFNSLVLSNFALNSLLHVIDFYQIKDRVLVKEVYNPEDLYHLRILNSLTACYLEYSISYGDIREQDDMLKEFNKLVAKFPQANFGDDIKISEINLGDIVNGIFINLKNYFAQCLDDFNNDRYGGNADTFIFVFPELNYWLKNWEELLAKDGAGVLLFTFDFYHIMICRTFITEFSSTLKSNQRFLKLILNTMKEHSFSLLNGFLRLPPTLIRGAPIFTCHQLVYACLTLCDYLYWFDSSERQRVLSLCTKVYWHLSTIGEKMNEATDNVGKIIKSIIDTSKTRINFGSLSKENSDNDKMSTNANNYTGAGNLHAAKPATSPTNVGTLHENLSSSHFMIPDVDQFNSFEDFFQDFFDSLKPNSQKMFTSDKKTEQTT.

The disordered stretch occupies residues 1–70 (MDINSNASVS…KKPRKKRKTF (70 aa)). The span at 39-51 (HPEDSARAKERSE) shows a compositional bias: basic and acidic residues. Residues 59–69 (GNKKPRKKRKT) are compositionally biased toward basic residues. Positions 72 to 101 (CDTCRRVKTRCDFEPFIGKCYRCNVLQLDC) form a DNA-binding region, zn(2)-C6 fungal-type.

Belongs to the URC2 family.

The protein localises to the cytoplasm. Its subcellular location is the nucleus. In terms of biological role, probable transcriptional activator involved in uracil catabolism. This is Uracil catabolism protein 2 (URC2) from Saccharomyces cerevisiae (strain ATCC 204508 / S288c) (Baker's yeast).